A 106-amino-acid polypeptide reads, in one-letter code: UPF0145 protein CKL_2433 (106 aa).

It belongs to the UPF0145 family.

The sequence is that of UPF0145 protein CKL_2433 from Clostridium kluyveri (strain ATCC 8527 / DSM 555 / NBRC 12016 / NCIMB 10680 / K1).